Here is a 118-residue protein sequence, read N- to C-terminus: uncharacterized protein (118 aa).

A disulfide bond links cysteine 11 and cysteine 14.

It belongs to the ArsC family.

This is an uncharacterized protein from Bacillus subtilis (strain 168).